The primary structure comprises 209 residues: Large ribosomal subunit protein uL3 (209 aa).

The disordered stretch occupies residues 128–154; that stretch reads QQRGPMTHGSKFHRAPGSMGASSDPSR.

This sequence belongs to the universal ribosomal protein uL3 family. As to quaternary structure, part of the 50S ribosomal subunit. Forms a cluster with proteins L14 and L19.

In terms of biological role, one of the primary rRNA binding proteins, it binds directly near the 3'-end of the 23S rRNA, where it nucleates assembly of the 50S subunit. The sequence is that of Large ribosomal subunit protein uL3 from Clostridium beijerinckii (strain ATCC 51743 / NCIMB 8052) (Clostridium acetobutylicum).